A 129-amino-acid polypeptide reads, in one-letter code: Small ribosomal subunit protein uS11 (129 aa).

It belongs to the universal ribosomal protein uS11 family. In terms of assembly, part of the 30S ribosomal subunit. Interacts with proteins S7 and S18. Binds to IF-3.

In terms of biological role, located on the platform of the 30S subunit, it bridges several disparate RNA helices of the 16S rRNA. Forms part of the Shine-Dalgarno cleft in the 70S ribosome. The polypeptide is Small ribosomal subunit protein uS11 (Methylobacterium radiotolerans (strain ATCC 27329 / DSM 1819 / JCM 2831 / NBRC 15690 / NCIMB 10815 / 0-1)).